Reading from the N-terminus, the 184-residue chain is Interferon alpha-2 (184 aa).

A signal peptide spans 1 to 23; it reads MALPFSLLMALVVLSCHSSCSLG. 2 cysteine pairs are disulfide-bonded: Cys24-Cys122 and Cys52-Cys162.

Belongs to the alpha/beta interferon family. As to quaternary structure, interacts with IFNAR2.

It is found in the secreted. Produced by macrophages, IFN-alpha have antiviral activities. This Equus caballus (Horse) protein is Interferon alpha-2.